A 344-amino-acid chain; its full sequence is Ferrochelatase (344 aa).

Residues H191 and E271 each coordinate Fe cation.

It belongs to the ferrochelatase family.

It localises to the cytoplasm. The catalysed reaction is heme b + 2 H(+) = protoporphyrin IX + Fe(2+). It participates in porphyrin-containing compound metabolism; protoheme biosynthesis; protoheme from protoporphyrin-IX: step 1/1. Functionally, catalyzes the ferrous insertion into protoporphyrin IX. The sequence is that of Ferrochelatase from Pelagibacter ubique (strain HTCC1062).